We begin with the raw amino-acid sequence, 62 residues long: UPF0434 protein NGR_c31900 (62 aa).

It belongs to the UPF0434 family.

This chain is UPF0434 protein NGR_c31900, found in Sinorhizobium fredii (strain NBRC 101917 / NGR234).